The sequence spans 584 residues: ATP synthase subunit alpha, mitochondrial (584 aa).

Residues 1 to 24 constitute a mitochondrion transit peptide; the sequence is MRRFGSKFASGLASRCALACPLAS. ATP is bound by residues 207–214 and Gln464; that span reads DRQTGKTS.

This sequence belongs to the ATPase alpha/beta chains family. F-type ATPases have 2 components, F(1) - the catalytic core - and F(o) - the membrane proton channel. F(1) has five subunits: alpha(3), beta(3), gamma(1), delta(1), epsilon(1), plus the additional subunit P18 (Tb427.05.1710) that is not present in F(1)F(o) ATP synthase from metazoa. Subunit P18 (Tb927.5.1710) interacts with the alpha subunit with a 1:1 stoichiometry; the interaction is direct. Subunit gamma is part of the central stalk. F(o) has three main subunits: a, b and c. The trypanosomal ATPase complex contains additional subunits that are not present in the F(1)F(o) ATP synthase from metazoa.

It is found in the mitochondrion. Its subcellular location is the mitochondrion inner membrane. In terms of biological role, mitochondrial membrane ATP synthase (F(1)F(o) ATP synthase) produces ATP from ADP in the presence of a proton gradient across the membrane which is generated by electron transport complexes of the respiratory chain. F-type ATPases consist of two structural domains, F(1) - containing the extramembraneous catalytic core, and F(o) - containing the membrane proton channel, linked together by a central stalk and a peripheral stalk. During catalysis, ATP synthesis in the catalytic domain of F(1) is coupled via a rotary mechanism of the central stalk subunits to proton translocation. Subunits alpha and beta form the catalytic core in F(1). Rotation of the central stalk against the surrounding alpha(3)beta(3) subunits leads to hydrolysis of ATP in three separate catalytic sites on the beta subunits. Subunit alpha does not bear the catalytic high-affinity ATP-binding sites. Contrary to the procyclic, insect form that requires F(1)F(o) ATP synthase for ATP synthesis, the bloodstream form relies on ATP hydrolysis by F(1)F(o) ATP synthase to maintain its mitochondrial membrane potential. The chain is ATP synthase subunit alpha, mitochondrial from Trypanosoma brucei brucei.